Here is a 548-residue protein sequence, read N- to C-terminus: CTP synthase (548 aa).

The segment at 1–270 is amidoligase domain; the sequence is MTKYVFVTGG…DNIVCEALGL (270 aa). Residue Ser-13 participates in CTP binding. UTP is bound at residue Ser-13. Residues 14–19 and Asp-71 contribute to the ATP site; that span reads SLGKGI. The Mg(2+) site is built by Asp-71 and Glu-144. CTP contacts are provided by residues 151-153, 191-196, and Lys-227; these read DIE and KTKPTQ. Residues 191 to 196 and Lys-227 contribute to the UTP site; that span reads KTKPTQ. The Glutamine amidotransferase type-1 domain occupies 295–545; sequence TIGMVGKYVD…IEAAIANHAR (251 aa). Gly-356 lines the L-glutamine pocket. Residue Cys-383 is the Nucleophile; for glutamine hydrolysis of the active site. L-glutamine is bound by residues 384–387, Glu-407, and Arg-473; that span reads LGMQ. Catalysis depends on residues His-518 and Glu-520.

Belongs to the CTP synthase family. As to quaternary structure, homotetramer.

The enzyme catalyses UTP + L-glutamine + ATP + H2O = CTP + L-glutamate + ADP + phosphate + 2 H(+). The catalysed reaction is L-glutamine + H2O = L-glutamate + NH4(+). It catalyses the reaction UTP + NH4(+) + ATP = CTP + ADP + phosphate + 2 H(+). It functions in the pathway pyrimidine metabolism; CTP biosynthesis via de novo pathway; CTP from UDP: step 2/2. With respect to regulation, allosterically activated by GTP, when glutamine is the substrate; GTP has no effect on the reaction when ammonia is the substrate. The allosteric effector GTP functions by stabilizing the protein conformation that binds the tetrahedral intermediate(s) formed during glutamine hydrolysis. Inhibited by the product CTP, via allosteric rather than competitive inhibition. Functionally, catalyzes the ATP-dependent amination of UTP to CTP with either L-glutamine or ammonia as the source of nitrogen. Regulates intracellular CTP levels through interactions with the four ribonucleotide triphosphates. In Bordetella petrii (strain ATCC BAA-461 / DSM 12804 / CCUG 43448), this protein is CTP synthase.